The following is a 206-amino-acid chain: Large ribosomal subunit protein uL4 (206 aa).

It belongs to the universal ribosomal protein uL4 family. In terms of assembly, part of the 50S ribosomal subunit.

One of the primary rRNA binding proteins, this protein initially binds near the 5'-end of the 23S rRNA. It is important during the early stages of 50S assembly. It makes multiple contacts with different domains of the 23S rRNA in the assembled 50S subunit and ribosome. Its function is as follows. Forms part of the polypeptide exit tunnel. This is Large ribosomal subunit protein uL4 from Cereibacter sphaeroides (strain ATCC 17025 / ATH 2.4.3) (Rhodobacter sphaeroides).